The sequence spans 816 residues: Transducer protein Htr18 (816 aa).

2 consecutive transmembrane segments (helical) span residues 21 to 41 (VVIV…TQAV) and 282 to 302 (NIVV…LVIG). The HAMP 1 domain maps to 303-356 (RDALTALTDMSDRAEAIAAGDIDTAIEETTRIDEVGDLRRSFRDIQEYLQTVAG). The tract at residues 399–425 (DAQETAEQSRKEAEQSREEAEALAAAL) is disordered. Over residues 405-418 (EQSRKEAEQSREEA) the composition is skewed to basic and acidic residues. One can recognise an HAMP 2 domain in the interval 423 to 476 (AALESQAQDIRETVEHAADGDLTQRLETDTDHESMAAIATALNSLLEELEGTIH). The 237-residue stretch at 495–731 (SAEEVKRASG…EVVTMVDEVG (237 aa)) folds into the Methyl-accepting transducer domain. The disordered stretch occupies residues 790 to 816 (GGAENTTGAFVRSASTDHSRDATHHDT). Polar residues predominate over residues 793–803 (ENTTGAFVRSA). Residues 804-816 (STDHSRDATHHDT) are compositionally biased toward basic and acidic residues.

It belongs to the methyl-accepting chemotaxis (MCP) protein family. In terms of processing, methylated by CheR.

Its subcellular location is the cell membrane. Its function is as follows. Potentially involved in chemo- or phototactic signal transduction. The chain is Transducer protein Htr18 (htr18) from Halobacterium salinarum (strain ATCC 29341 / DSM 671 / R1).